We begin with the raw amino-acid sequence, 70 residues long: Conotoxin Lt11.6 (70 aa).

The N-terminal stretch at 1–26 is a signal peptide; the sequence is MMFRLTSVGSFLLVIVFLNLVVLTNA. Disulfide bonds link cysteine 27–cysteine 41, cysteine 34–cysteine 46, cysteine 40–cysteine 50, and cysteine 45–cysteine 54. Residues 58–70 constitute a propeptide that is removed on maturation; sequence AQRQKLLRSFGQR.

This sequence belongs to the conotoxin I2 superfamily. In terms of tissue distribution, expressed by the venom duct.

Its subcellular location is the secreted. This Conus litteratus (Lettered cone) protein is Conotoxin Lt11.6.